Here is a 269-residue protein sequence, read N- to C-terminus: Malonyl-[acyl-carrier protein] O-methyltransferase (269 aa).

This sequence belongs to the methyltransferase superfamily.

The enzyme catalyses malonyl-[ACP] + S-adenosyl-L-methionine = malonyl-[ACP] methyl ester + S-adenosyl-L-homocysteine. It functions in the pathway cofactor biosynthesis; biotin biosynthesis. In terms of biological role, converts the free carboxyl group of a malonyl-thioester to its methyl ester by transfer of a methyl group from S-adenosyl-L-methionine (SAM). It allows to synthesize pimeloyl-ACP via the fatty acid synthetic pathway. This Bacillus anthracis protein is Malonyl-[acyl-carrier protein] O-methyltransferase.